A 449-amino-acid polypeptide reads, in one-letter code: Deoxyguanosinetriphosphate triphosphohydrolase-like protein (449 aa).

Residues 1 to 27 are disordered; that stretch reads MTSSVWQERRHGEDKQRRNDHRSPYQR. Residues 7-27 are compositionally biased toward basic and acidic residues; sequence QERRHGEDKQRRNDHRSPYQR. In terms of domain architecture, HD spans 59 to 255; it reads RLTHSLEVSQ…MELADDIAYA (197 aa).

Belongs to the dGTPase family. Type 2 subfamily.

In Shewanella baltica (strain OS185), this protein is Deoxyguanosinetriphosphate triphosphohydrolase-like protein.